A 260-amino-acid chain; its full sequence is Hemin import ATP-binding protein HmuV (260 aa).

Residues 6-242 (LSGRNISMKY…ERIEQVYGYR (237 aa)) form the ABC transporter domain. 38-45 (GPNGAGKS) serves as a coordination point for ATP.

This sequence belongs to the ABC transporter superfamily. Heme (hemin) importer (TC 3.A.1.14.5) family. In terms of assembly, the complex is composed of two ATP-binding proteins (HmuV), two transmembrane proteins (HmuU) and a solute-binding protein (HmuT).

It localises to the cell inner membrane. Part of the ABC transporter complex HmuTUV involved in hemin import. Responsible for energy coupling to the transport system. This chain is Hemin import ATP-binding protein HmuV, found in Vibrio parahaemolyticus serotype O3:K6 (strain RIMD 2210633).